The following is a 174-amino-acid chain: Alpha-crystallin B chain (174 aa).

M1 bears the N-acetylmethionine mark. Residues R55–E163 enclose the sHSP domain. Positions 82, 103, 105, and 110 each coordinate Zn(2+). The disordered stretch occupies residues R148–K174. The span at K149 to P166 shows a compositional bias: basic and acidic residues.

Belongs to the small heat shock protein (HSP20) family. In terms of assembly, heteromer composed of three CRYAA and one CRYAB subunits. Aggregates with homologous proteins, including the small heat shock protein HSPB1, to form large heteromeric complexes. Inter-subunit bridging via zinc ions enhances stability, which is crucial as there is no protein turn over in the lens. In terms of tissue distribution, lens as well as other tissues.

In terms of biological role, may contribute to the transparency and refractive index of the lens. The sequence is that of Alpha-crystallin B chain (CRYAB) from Gallus gallus (Chicken).